The sequence spans 119 residues: Large ribosomal subunit protein uL22 (119 aa).

Belongs to the universal ribosomal protein uL22 family. In terms of assembly, part of the 50S ribosomal subunit.

This protein binds specifically to 23S rRNA; its binding is stimulated by other ribosomal proteins, e.g. L4, L17, and L20. It is important during the early stages of 50S assembly. It makes multiple contacts with different domains of the 23S rRNA in the assembled 50S subunit and ribosome. In terms of biological role, the globular domain of the protein is located near the polypeptide exit tunnel on the outside of the subunit, while an extended beta-hairpin is found that lines the wall of the exit tunnel in the center of the 70S ribosome. The chain is Large ribosomal subunit protein uL22 from Tropheryma whipplei (strain TW08/27) (Whipple's bacillus).